The sequence spans 373 residues: Glutamate 5-kinase (373 aa).

Residue Lys-16 coordinates ATP. Ser-56, Asp-143, and Asn-155 together coordinate substrate. Residue 175-176 (TD) coordinates ATP. A PUA domain is found at 281–359 (RGRLTLDDGA…SRIDSLLGYK (79 aa)).

Belongs to the glutamate 5-kinase family.

The protein localises to the cytoplasm. The catalysed reaction is L-glutamate + ATP = L-glutamyl 5-phosphate + ADP. It participates in amino-acid biosynthesis; L-proline biosynthesis; L-glutamate 5-semialdehyde from L-glutamate: step 1/2. Functionally, catalyzes the transfer of a phosphate group to glutamate to form L-glutamate 5-phosphate. The sequence is that of Glutamate 5-kinase from Saccharophagus degradans (strain 2-40 / ATCC 43961 / DSM 17024).